The following is a 132-amino-acid chain: Chemokine-like protein TAFA-5 (132 aa).

A signal peptide spans 1 to 43; that stretch reads MAPSPRTSSRQDATALPSMSSTFWAFMILASLLIAYCSQLAAG. Residue N113 is glycosylated (N-linked (GlcNAc...) asparagine).

Belongs to the TAFA family. In terms of tissue distribution, expressed in the subcutaneous, brown, epididymal and perirenal adipose tissue (at protein level).

It is found in the secreted. Its function is as follows. Acts as a chemokine-like protein by regulating cell proliferation and migration through activation of G protein-coupled receptors (GPCRs), such as S1PR2 and FPR2. Stimulates chemotactic migration of macrophages mediated by the MAPK3/ERK1 and AKT1 pathway. Blocks TNFSF11/RANKL-induced osteoclast formation from macrophages by inhibiting up-regulation of osteoclast fusogenic and differentiation genes. Stimulation of macrophage migration and inhibition of osteoclast formation is mediated through the GPCR FPR2. Acts as an adipokine by negatively regulating vascular smooth muscle cell (VSMC) proliferation and migration in response to platelet-derived growth factor stimulation via GPCR S1PR2 and G protein GNA12/GNA13-transmitted RHOA signaling. Inhibits injury-induced cell proliferation and neointima formation in the femoral arteries. This chain is Chemokine-like protein TAFA-5 (Tafa5), found in Mus musculus (Mouse).